The sequence spans 207 residues: B2 protein (207 aa).

Positions 1–68 (MIDQEESNFN…FKTLPPAESL (68 aa)) are disordered. Composition is skewed to low complexity over residues 8-26 (NFNF…QFHG) and 35-52 (KNNN…GENK). One can recognise a DCD domain in the interval 72-204 (ETVGGYIFVC…AISLLDIFEE (133 aa)).

The chain is B2 protein from Daucus carota (Wild carrot).